A 104-amino-acid polypeptide reads, in one-letter code: DET1- and DDB1-associated protein 1 (104 aa).

Residues 67 to 77 show a composition bias toward basic and acidic residues; the sequence is KKNAAKKREQE. Residues 67–104 form a disordered region; it reads KKNAAKKREQEQAEGEGGSPAPPRKIARTDSQEMNEDS.

Belongs to the DDA1 family. Component of numerous DCX (DDB1-CUL4-X-box) E3 ubiquitin-protein ligase complexes which consist of a core of DDB1, cullin-4 (CUL4A or CUL4B), DDA1 and RBX1.

The protein operates within protein modification; protein ubiquitination. Functions as a component of numerous distinct DCX (DDB1-CUL4-X-box) E3 ubiquitin-protein ligase complexes which mediate the ubiquitination and subsequent proteasomal degradation of target proteins. In the DCX complexes, acts as a scaffolding subunit required to stabilize the complex. The sequence is that of DET1- and DDB1-associated protein 1 from Danio rerio (Zebrafish).